The following is a 180-amino-acid chain: MIIEEQVVLVDQQGRALGLQEKMQAHRDGALHLAFSVLLYRETTQGIEFLMQQRALGKYHSGGLWTNTCCSHPRQGETLEQAGLRRLTEEMGIVGLESLDDIASFVYRAELDNQLIEHEWDHVLIANGTELAIIPNSEEVKSYRWWSKADLELGLADTPELFTAWFPQVLQYVINELSSQ.

Positions 26 and 32 each coordinate Mn(2+). Residues 30 to 168 (ALHLAFSVLL…PELFTAWFPQ (139 aa)) enclose the Nudix hydrolase domain. Cys-70 is an active-site residue. Cys-70 contributes to the Mg(2+) binding site. Residue His-72 coordinates Mn(2+). Glu-90 serves as a coordination point for Mg(2+). Glu-117 and Glu-119 together coordinate Mn(2+). The active site involves Glu-119.

It belongs to the IPP isomerase type 1 family. The cofactor is Mg(2+). Mn(2+) serves as cofactor.

The protein resides in the cytoplasm. The enzyme catalyses isopentenyl diphosphate = dimethylallyl diphosphate. Its pathway is isoprenoid biosynthesis; dimethylallyl diphosphate biosynthesis; dimethylallyl diphosphate from isopentenyl diphosphate: step 1/1. Functionally, catalyzes the 1,3-allylic rearrangement of the homoallylic substrate isopentenyl (IPP) to its highly electrophilic allylic isomer, dimethylallyl diphosphate (DMAPP). This is Isopentenyl-diphosphate Delta-isomerase from Photobacterium profundum (strain SS9).